A 438-amino-acid chain; its full sequence is Cyclic 2,3-diphosphoglycerate synthetase (438 aa).

Belongs to the cyclic 2,3-diphosphoglycerate synthetase family.

Its subcellular location is the cytoplasm. It catalyses the reaction (2R)-2,3-bisphosphoglycerate + ATP + H(+) = cyclic (2R)-2,3-bisphosphoglycerate + ADP + phosphate. Its function is as follows. Catalyzes the formation of cyclic 2,3-diphosphoglycerate (cDPG) by formation of an intramolecular phosphoanhydride bond at the expense of ATP. This is Cyclic 2,3-diphosphoglycerate synthetase from Thermococcus gammatolerans (strain DSM 15229 / JCM 11827 / EJ3).